Here is a 718-residue protein sequence, read N- to C-terminus: Peroxisomal bifunctional enzyme (718 aa).

Positions 2-280 (ARYELVKRSV…FAQRTAEKWT (279 aa)) are enoyl-CoA hydratase / isomerase. Position 100 (glycine 100) interacts with substrate. Positions 281 to 567 (LPSGAQWNNS…DMVCQQGRFG (287 aa)) are 3-hydroxyacyl-CoA dehydrogenase. The short motif at 716 to 718 (SHL) is the Microbody targeting signal element.

The protein in the N-terminal section; belongs to the enoyl-CoA hydratase/isomerase family. This sequence in the C-terminal section; belongs to the 3-hydroxyacyl-CoA dehydrogenase family. In terms of assembly, monomer.

The protein localises to the peroxisome. The enzyme catalyses a (3S)-3-hydroxyacyl-CoA = a (2E)-enoyl-CoA + H2O. It carries out the reaction a 4-saturated-(3S)-3-hydroxyacyl-CoA = a (3E)-enoyl-CoA + H2O. The catalysed reaction is a (3Z)-enoyl-CoA = a 4-saturated (2E)-enoyl-CoA. It catalyses the reaction a (3E)-enoyl-CoA = a 4-saturated (2E)-enoyl-CoA. The enzyme catalyses a (3S)-3-hydroxyacyl-CoA + NAD(+) = a 3-oxoacyl-CoA + NADH + H(+). It carries out the reaction (2S,3S)-3-hydroxy-2-methylbutanoyl-CoA = (2E)-2-methylbut-2-enoyl-CoA + H2O. The catalysed reaction is (3S)-hydroxyhexadecanoyl-CoA + NAD(+) = 3-oxohexadecanoyl-CoA + NADH + H(+). It catalyses the reaction (3S)-hydroxyhexadecanoyl-CoA = (2E)-hexadecenoyl-CoA + H2O. The enzyme catalyses (2E)-hexadecenedioyl-CoA + H2O = (3S)-hydroxyhexadecanedioyl-CoA. It carries out the reaction (3S)-hydroxyhexadecanedioyl-CoA + NAD(+) = 3-oxohexadecanedioyl-CoA + NADH + H(+). The catalysed reaction is (3E,5Z)-tetradecadienoyl-CoA = (2E,5Z)-tetradecadienoyl-CoA. It catalyses the reaction (3E,5Z)-octadienoyl-CoA = (2E,5Z)-octadienoyl-CoA. The enzyme catalyses (3S)-hydroxydecanoyl-CoA + NAD(+) = 3-oxodecanoyl-CoA + NADH + H(+). It carries out the reaction (3E)-decenoyl-CoA = (2E)-decenoyl-CoA. The catalysed reaction is (3Z)-hexenoyl-CoA = (2E)-hexenoyl-CoA. It catalyses the reaction (3E)-hexenoyl-CoA = (2E)-hexenoyl-CoA. The enzyme catalyses (3S)-hydroxydecanoyl-CoA = (2E)-decenoyl-CoA + H2O. It carries out the reaction (3S)-hydroxyhexanoyl-CoA = (2E)-hexenoyl-CoA + H2O. It functions in the pathway lipid metabolism; fatty acid beta-oxidation. Peroxisomal trifunctional enzyme possessing 2-enoyl-CoA hydratase, 3-hydroxyacyl-CoA dehydrogenase, and delta 3, delta 2-enoyl-CoA isomerase activities. Catalyzes two of the four reactions of the long straight chain fatty acids peroxisomal beta-oxidation pathway. Can also use branched-chain fatty acids such as 2-methyl-2E-butenoyl-CoA as a substrate, which is hydrated into (2S,3S)-3-hydroxy-2-methylbutanoyl-CoA. Optimal isomerase for 2,5 double bonds into 3,5 form isomerization in a range of enoyl-CoA species. Also able to isomerize both 3-cis and 3-trans double bonds into the 2-trans form in a range of enoyl-CoA species. Regulates the amount of medium-chain dicarboxylic fatty acids which are essential regulators of all fatty acid oxidation pathways. Also involved in the degradation of long-chain dicarboxylic acids through peroxisomal beta-oxidation. This chain is Peroxisomal bifunctional enzyme (ehhadh), found in Danio rerio (Zebrafish).